The following is a 144-amino-acid chain: Ferredoxin-thioredoxin reductase catalytic chain, chloroplastic (144 aa).

A chloroplast-targeting transit peptide spans 1 to 31 (MTTQASTFAVAVPSVATPFRRHRNPFVVRAQ). [4Fe-4S] cluster is bound at residue C83. C85 functions as the Nucleophile in the catalytic mechanism. A disulfide bond links C85 and C115. C102, C104, and C113 together coordinate [4Fe-4S] cluster.

This sequence belongs to the ferredoxin thioredoxin reductase beta subunit family. In terms of assembly, heterodimer of subunit A (variable subunit) and subunit B (catalytic subunit). Heterodimeric FTR forms a complex with ferredoxin and thioredoxin. [4Fe-4S] cluster serves as cofactor.

It is found in the plastid. The protein localises to the chloroplast. It catalyses the reaction [thioredoxin]-disulfide + 2 reduced [2Fe-2S]-[ferredoxin] + 2 H(+) = [thioredoxin]-dithiol + 2 oxidized [2Fe-2S]-[ferredoxin]. Catalytic subunit of the ferredoxin-thioredoxin reductase (FTR), which catalyzes the two-electron reduction of thioredoxins by the electrons provided by reduced ferredoxin. The polypeptide is Ferredoxin-thioredoxin reductase catalytic chain, chloroplastic (FTRC) (Glycine max (Soybean)).